Here is a 501-residue protein sequence, read N- to C-terminus: Aluminum-activated malate transporter 2 (501 aa).

The next 6 membrane-spanning stretches (helical) occupy residues 22-42, 52-72, 78-98, 101-121, 130-150, and 166-186; these read VVHAFKVGLALALVSSFYYYQ, AMWAVMTVVVVFEFSVGATLG, AVATLVAGGLGIGAHHLASLS, TVEPILLAIFVFVLAALSTFV, RYDYGVLIFILTFALISVSGF, and VIMGGVSCVLISIFVCPVWAG. The segment at 398–425 is disordered; that stretch reads FKNKKKPSKSNSGSIGQAMPNKSHDDDD.

Belongs to the aromatic acid exporter (TC 2.A.85) family.

It is found in the membrane. Its function is as follows. Malate transporter. The protein is Aluminum-activated malate transporter 2 (ALMT2) of Arabidopsis thaliana (Mouse-ear cress).